The primary structure comprises 504 residues: Maturase K (504 aa).

The protein belongs to the intron maturase 2 family. MatK subfamily.

It is found in the plastid. It localises to the chloroplast. Functionally, usually encoded in the trnK tRNA gene intron. Probably assists in splicing its own and other chloroplast group II introns. This chain is Maturase K, found in Quercus petraea (Durmast oak).